The primary structure comprises 264 residues: Movement protein (264 aa).

Residues 211–264 are disordered; the sequence is RTKSSKRGPKNNNNLGKGRSGGRPKPKSVDEVEEEFDNLIEDEAETSVADSDSY. Acidic residues predominate over residues 241–255; the sequence is EVEEEFDNLIEDEAE.

It belongs to the tobamovirus movement protein family. Binds to host RBCS at the plasmodesmata; this interaction seems required for viral systemic movement. In resistant plants, interacts with host MBP2C at host microtubules; this interaction prevents virus cell to cell movement. In resistant plants, interacts with host resistance (R) protein (e.g. tomato ToMV resistance protein TM-2(2), AC Q71BG9) at the host plasma membrane; this interaction triggers host defense responses leading to programmed cell death.

Its subcellular location is the host cytoplasm. It localises to the host cytoskeleton. The protein localises to the host cell junction. It is found in the host plasmodesma. Transports viral genome to neighboring plant cells directly through plasmosdesmata, without any budding. The movement protein allows efficient cell to cell propagation, by bypassing the host cell wall barrier. Forms a ribonucleoprotein complex with viral RNA. Binds microtubules and modulates microtubule stability. Can bind double-stranded DNA. Triggers host hypersensitive defense reaction in incompatible plants harboring resistance (R) proteins. The polypeptide is Movement protein (MP) (Antirrhinum majus (Garden snapdragon)).